We begin with the raw amino-acid sequence, 1457 residues long: Receptor-type tyrosine-protein phosphatase kappa (1457 aa).

An N-terminal signal peptide occupies residues 1–25; it reads MDVAAAALPAFVALWLLYPWPLLGS. Topologically, residues 26 to 752 are extracellular; that stretch reads ALGQFSAGGC…PAKQTDRVVK (727 aa). The 164-residue stretch at 30–193 folds into the MAM domain; that stretch reads FSAGGCTFDD…IQVLSYPCDK (164 aa). 3 N-linked (GlcNAc...) asparagine glycosylation sites follow: Asn-100, Asn-139, and Asn-210. Residues 195–280 enclose the Ig-like C2-type domain; that stretch reads PHFLRLGDVE…TQSERGSGVS (86 aa). A disulfide bridge links Cys-215 with Cys-269. Fibronectin type-III domains lie at 293-388, 391-487, 490-594, and 595-688; these read PIAP…CAEP, TPKT…TDED, GPVP…SAPS, and LPDY…TVGD. Asn-415, Asn-423, Asn-435, Asn-461, Asn-551, Asn-585, Asn-589, Asn-606, and Asn-689 each carry an N-linked (GlcNAc...) asparagine glycan. Residues 753-774 traverse the membrane as a helical segment; the sequence is IAGISAGILVFILLLLVVIVIV. Residues 775–1457 lie on the Cytoplasmic side of the membrane; the sequence is KKSKLAKKRK…DVALEYLESS (683 aa). Ser-868 bears the Phosphoserine mark. Tyrosine-protein phosphatase domains follow at residues 899–1159 and 1191–1453; these read FKEE…ILEA and LKDE…ALEY. Substrate is bound by residues Asp-1068, 1100–1106, and Gln-1144; that span reads CSAGAGR. Catalysis depends on Cys-1100, which acts as the Phosphocysteine intermediate. The active-site Phosphocysteine intermediate is Cys-1394.

It belongs to the protein-tyrosine phosphatase family. Receptor class 2B subfamily. Post-translationally, this protein undergoes proteolytic processing. As to expression, high levels in liver and kidney. Lower levels in lung, brain and heart. Not seen in spleen and testis.

Its subcellular location is the membrane. The catalysed reaction is O-phospho-L-tyrosyl-[protein] + H2O = L-tyrosyl-[protein] + phosphate. In terms of biological role, regulation of processes involving cell contact and adhesion such as growth control, tumor invasion, and metastasis. Negative regulator of EGFR signaling pathway. Forms complexes with beta-catenin and gamma-catenin/plakoglobin. Beta-catenin may be a substrate for the catalytic activity of PTPRK/PTP-kappa. This Mus musculus (Mouse) protein is Receptor-type tyrosine-protein phosphatase kappa (Ptprk).